The sequence spans 404 residues: Protein IQ-DOMAIN 12 (404 aa).

The interval 8–25 (FGWMKRLFICEAKARAEK) is calmodulin-binding. The Nuclear localization signal 1 motif lies at 11–18 (MKRLFICE). IQ domains lie at 108-135 (NVAA…ALVR) and 136-158 (LQAI…SSHS). The Nuclear localization signal 2 motif lies at 226–233 (IKRDRMLK).

The protein belongs to the IQD family. In terms of assembly, binds to multiple calmodulin (CaM) in the presence of Ca(2+) and CaM-like proteins.

It localises to the nucleus. The protein resides in the cell membrane. Functionally, may be involved in cooperative interactions with calmodulins or calmodulin-like proteins. Recruits calmodulin proteins to microtubules, thus being a potential scaffold in cellular signaling and trafficking. May associate with nucleic acids and regulate gene expression at the transcriptional or post-transcriptional level. The chain is Protein IQ-DOMAIN 12 from Arabidopsis thaliana (Mouse-ear cress).